The following is a 135-amino-acid chain: Large ribosomal subunit protein uL16 (135 aa).

Belongs to the universal ribosomal protein uL16 family. In terms of assembly, part of the 50S ribosomal subunit.

In terms of biological role, binds 23S rRNA and is also seen to make contacts with the A and possibly P site tRNAs. This is Large ribosomal subunit protein uL16 from Desulforapulum autotrophicum (strain ATCC 43914 / DSM 3382 / VKM B-1955 / HRM2) (Desulfobacterium autotrophicum).